A 1511-amino-acid chain; its full sequence is DNA-directed RNA polymerase subunit beta' (1511 aa).

Zn(2+) is bound by residues C75, C77, C90, and C93. The Mg(2+) site is built by D474, D476, and D478. C804, C878, C885, and C888 together coordinate Zn(2+).

The protein belongs to the RNA polymerase beta' chain family. As to quaternary structure, the RNAP catalytic core consists of 2 alpha, 1 beta, 1 beta' and 1 omega subunit. When a sigma factor is associated with the core the holoenzyme is formed, which can initiate transcription. Mg(2+) is required as a cofactor. Requires Zn(2+) as cofactor.

It carries out the reaction RNA(n) + a ribonucleoside 5'-triphosphate = RNA(n+1) + diphosphate. Functionally, DNA-dependent RNA polymerase catalyzes the transcription of DNA into RNA using the four ribonucleoside triphosphates as substrates. The polypeptide is DNA-directed RNA polymerase subunit beta' (Aliarcobacter butzleri (strain RM4018) (Arcobacter butzleri)).